Here is a 285-residue protein sequence, read N- to C-terminus: Energy-coupling factor transporter ATP-binding protein EcfA2 (285 aa).

An ABC transporter domain is found at 3 to 245 (INFEQVNFSY…DLVWFKTVAL (243 aa)). 40-47 (GQTGSGKS) serves as a coordination point for ATP. Glutamate 171 (proton acceptor) is an active-site residue.

It belongs to the ABC transporter superfamily. Energy-coupling factor EcfA family. In terms of assembly, forms a stable energy-coupling factor (ECF) transporter complex probably composed of 2 membrane-embedded substrate-binding proteins (S component), 2 ATP-binding proteins (A component) and 2 transmembrane proteins (T component). This complex interacts with a number of substrate-specific components, including FolT, PanT and RibU for 5-formyltetrahydrofolate, pantothenate and riboflavin respectively.

Its subcellular location is the cell membrane. Its function is as follows. ATP-binding (A) component of a common energy-coupling factor (ECF) ABC-transporter complex. Unlike classic ABC transporters this ECF transporter provides the energy necessary to transport a number of different substrates including 5-formyltetrahydrofolate, pantothenate and riboflavin. Expression of the complex plus FolT in E.coli allows 5-formyltetrahydrofolate uptake; 5-formyltetrahydrofolate is not taken up in the absence of FolT or the EcfA1A2T complex. The protein is Energy-coupling factor transporter ATP-binding protein EcfA2 of Leuconostoc mesenteroides subsp. mesenteroides (strain ATCC 8293 / DSM 20343 / BCRC 11652 / CCM 1803 / JCM 6124 / NCDO 523 / NBRC 100496 / NCIMB 8023 / NCTC 12954 / NRRL B-1118 / 37Y).